The primary structure comprises 26 residues: Toxin b subunit alpha (26 aa).

As to quaternary structure, toxin b is a heterodimer composed of toxin alpha and toxin beta. Expressed by the venom gland.

It localises to the secreted. Binds to sodium channels (Nav) and affects the channel activation process. The chain is Toxin b subunit alpha from Androctonus crassicauda (Arabian fat-tailed scorpion).